The following is a 215-amino-acid chain: Peroxiredoxin (215 aa).

The Thioredoxin domain maps to 3 to 158; sequence PLLGDNFPEI…ILRAVKALQV (156 aa). Cys-45 acts as the Cysteine sulfenic acid (-SOH) intermediate in catalysis. A substrate-binding site is contributed by Arg-121. Cys-205 and Cys-211 are disulfide-bonded.

Belongs to the peroxiredoxin family. Prx6 subfamily. Homodecamer. Pentamer of dimers that assemble into a ring structure.

It is found in the cytoplasm. It catalyses the reaction a hydroperoxide + [thioredoxin]-dithiol = an alcohol + [thioredoxin]-disulfide + H2O. Functionally, thiol-specific peroxidase that catalyzes the reduction of hydrogen peroxide and organic hydroperoxides to water and alcohols, respectively. Plays a role in cell protection against oxidative stress by detoxifying peroxides. In Archaeoglobus fulgidus (strain ATCC 49558 / DSM 4304 / JCM 9628 / NBRC 100126 / VC-16), this protein is Peroxiredoxin.